The following is a 332-amino-acid chain: Receptor polysaccharide phosphotransferase WefC (332 aa).

It belongs to the stealth family.

The protein is Receptor polysaccharide phosphotransferase WefC (wefC) of Streptococcus oralis.